The primary structure comprises 224 residues: Ribose-5-phosphate isomerase A 2 (224 aa).

Substrate contacts are provided by residues serine 27–threonine 30, aspartate 83–aspartate 86, and lysine 96–glycine 99. The active-site Proton acceptor is the glutamate 105. Residue lysine 123 participates in substrate binding.

Belongs to the ribose 5-phosphate isomerase family. Homodimer.

The enzyme catalyses aldehydo-D-ribose 5-phosphate = D-ribulose 5-phosphate. Its pathway is carbohydrate degradation; pentose phosphate pathway; D-ribose 5-phosphate from D-ribulose 5-phosphate (non-oxidative stage): step 1/1. Its function is as follows. Catalyzes the reversible conversion of ribose-5-phosphate to ribulose 5-phosphate. The sequence is that of Ribose-5-phosphate isomerase A 2 from Oceanobacillus iheyensis (strain DSM 14371 / CIP 107618 / JCM 11309 / KCTC 3954 / HTE831).